Reading from the N-terminus, the 362-residue chain is 45 kDa calcium-binding protein (362 aa).

The first 36 residues, methionine 1 to alanine 36, serve as a signal peptide directing secretion. Asparagine 40 carries N-linked (GlcNAc...) asparagine glycosylation. EF-hand domains are found at residues arginine 98 to glutamate 133 and glutamate 137 to histidine 172. Serine 99 bears the Phosphoserine mark. Positions 111, 113, 115, 117, 122, 150, 152, 154, 156, and 161 each coordinate Ca(2+). Phosphothreonine is present on threonine 193. 4 EF-hand domains span residues leucine 197 to glycine 232, methionine 233 to asparagine 268, tryptophan 278 to tyrosine 313, and asparagine 314 to serine 349. Aspartate 213 lines the Ca(2+) pocket. At threonine 217 the chain carries Phosphothreonine. Residues glutamate 220, aspartate 246, aspartate 248, aspartate 250, glutamine 252, and glutamate 257 each coordinate Ca(2+). Position 265 is a phosphothreonine (threonine 265). Residues aspartate 291, asparagine 293, and aspartate 295 each coordinate Ca(2+). Threonine 299 is subject to Phosphothreonine. Residues glutamate 302, aspartate 327, asparagine 329, asparagine 331, histidine 333, and glutamate 338 each contribute to the Ca(2+) site. The segment at proline 309–phenylalanine 362 is necessary for intracellular retention in Golgi apparatus lumen.

Belongs to the CREC family. As to quaternary structure, isoform 5 interacts with STXBP1; the interaction is enhanced in presence of calcium. Isoform 5 interacts with STX3. As to expression, ubiquitous. Isoform 5 is expressed in pancreas.

The protein resides in the golgi apparatus lumen. It localises to the cytoplasm. The protein localises to the cell membrane. It is found in the cell projection. Its subcellular location is the bleb. May regulate calcium-dependent activities in the endoplasmic reticulum lumen or post-ER compartment. In terms of biological role, isoform 5 may be involved in the exocytosis of zymogens by pancreatic acini. The protein is 45 kDa calcium-binding protein (SDF4) of Homo sapiens (Human).